A 334-amino-acid polypeptide reads, in one-letter code: Thioredoxin reductase (334 aa).

Residues 11–14 (SGAG), 40–41 (TA), Gln45, Asn54, Cys148, Asp294, and 301–303 (RQA) contribute to the FAD site. The cysteines at positions 145 and 148 are disulfide-linked.

Belongs to the class-II pyridine nucleotide-disulfide oxidoreductase family. Homodimer. Requires FAD as cofactor.

It carries out the reaction [thioredoxin]-dithiol + NADP(+) = [thioredoxin]-disulfide + NADPH + H(+). Its function is as follows. Component of the thioredoxin-thioredoxin reductase system which may be involved in biosynthesis of penicillins and cephalosporins and may be important in determining the thiol-disulfide redox balance. This Penicillium chrysogenum (Penicillium notatum) protein is Thioredoxin reductase (TRR1).